Consider the following 445-residue polypeptide: MSTTPAPANPKVGFVSLGCPKALVDSERILTQLRMEGYDVVSTYQDADVVVVNTCGFIDSAKAESLEVIGEAIKENGKVIVTGCMGVEEGNIRDVHPSVLAVTGPQQYEQVVNAVHEVVPPKQDHNPLIDLVPPQGIKLTPRHYAYLKISEGCNHSCSFCIIPSMRGKLVSRPVGDVLDEAQRLVKSGVKELLVISQDTSAYGVDVKYRTGFWNGAPVKTRMTELCEALSTLGVWVRLHYVYPYPHVDELIPLMAAGKILPYLDIPFQHASPKVLKSMKRPAFEDKTLARIKNWREICPDLIIRSTFIVGFPGETEEDFQYLLDWLTEAQLDRVGCFQYSPVEGAPANDLDLEVVPDDVKQDRWERFMAHQQAISSARLQLRIGREIEVLVDEVDEQGAVGRCFFDAPEIDGNVFIDNGSNLKPGDKVWCKVTDADEYDLWAEQI.

An MTTase N-terminal domain is found at 10–120; it reads PKVGFVSLGC…VVNAVHEVVP (111 aa). [4Fe-4S] cluster contacts are provided by cysteine 19, cysteine 55, cysteine 84, cysteine 153, cysteine 157, and cysteine 160. The Radical SAM core domain occupies 139–378; that stretch reads LTPRHYAYLK…AHQQAISSAR (240 aa). The TRAM domain occupies 380–445; sequence QLRIGREIEV…DEYDLWAEQI (66 aa).

The protein belongs to the methylthiotransferase family. RimO subfamily. [4Fe-4S] cluster serves as cofactor.

The protein localises to the cytoplasm. The enzyme catalyses L-aspartate(89)-[ribosomal protein uS12]-hydrogen + (sulfur carrier)-SH + AH2 + 2 S-adenosyl-L-methionine = 3-methylsulfanyl-L-aspartate(89)-[ribosomal protein uS12]-hydrogen + (sulfur carrier)-H + 5'-deoxyadenosine + L-methionine + A + S-adenosyl-L-homocysteine + 2 H(+). Its function is as follows. Catalyzes the methylthiolation of an aspartic acid residue of ribosomal protein uS12. The chain is Ribosomal protein uS12 methylthiotransferase RimO from Pseudomonas fluorescens (strain Pf0-1).